The following is a 123-amino-acid chain: Cholecystokinin (123 aa).

A signal peptide spans 1-19 (MNAGICVCVLLAALSTSSC). Positions 20–103 (LSLPAVSEDG…MGNNHRIKDR (84 aa)) are excised as a propeptide. Positions 43–67 (HTRAAPSSGQLSLLSKAEDDEEPRS) are disordered. Tyr105 is modified (sulfotyrosine). Position 111 is a phenylalanine amide (Phe111). The propeptide occupies 115-123 (SAEEYEYSS). Sulfotyrosine is present on residues Tyr119 and Tyr121.

It belongs to the gastrin/cholecystokinin family. In terms of processing, the precursor is cleaved by proteases to produce a number of active cholecystokinins. In terms of tissue distribution, expressed in the ovary, kidney, gill, gastrointestinal tract and pituitary. Differentially expressed in the brain in the optic tectum-thalamus, hypothalamus, telencephalon, olfactory bulb and tract, preoptic region and posterior brain region. Expression is strongest in the hypothalamus, where localization is to the posterior ventrolateral region. Expression in the brain is transiently increased 2 hours after feeding. Abundant in the sensory layers of the vagal lobe and along the border of the sensory region of the lobe and the deep fiber laye. Also present in the facial lobe and throughout the glossopharyngeal lobe.

Its subcellular location is the secreted. This peptide hormone induces gall bladder contraction and the release of pancreatic enzymes in the gut. Induces the secretion of gonadotropin and growth hormone from the pituitary. Suppresses food intake and decreases the expression of preprosomatostatin genes in the forebrain. The chain is Cholecystokinin (cck) from Carassius auratus (Goldfish).